Reading from the N-terminus, the 316-residue chain is Small neutral protease regulatory protein (316 aa).

Residues 1-56 (MRHLRALCAIADTGSVRRAARELGVSQPALTTQLRRIEQSLGAELFHRGRDGCRPT) form the HTH lysR-type domain. Positions 16–35 (VRRAARELGVSQPALTTQLR) form a DNA-binding region, H-T-H motif.

This sequence belongs to the LysR transcriptional regulatory family.

In terms of biological role, transcriptional trans-activator of the gene (mprA) for the small neutral protease. This is Small neutral protease regulatory protein (mprR) from Streptomyces coelicolor.